The following is a 607-amino-acid chain: Chaperone protein DnaK (607 aa).

Phosphothreonine; by autocatalysis is present on T173. The segment covering 577-588 (AQAQQGAEGAAS) has biased composition (low complexity). The interval 577–607 (AQAQQGAEGAASQDDDVVDADFTEVKDDDNK) is disordered. Residues 589–598 (QDDDVVDADF) are compositionally biased toward acidic residues.

Belongs to the heat shock protein 70 family.

Functionally, acts as a chaperone. In Macrococcus caseolyticus (strain JCSC5402) (Macrococcoides caseolyticum), this protein is Chaperone protein DnaK.